A 21-amino-acid polypeptide reads, in one-letter code: Fibrinogen beta chain (21 aa).

At glutamine 1 the chain carries Pyrrolidone carboxylic acid. Residue tyrosine 6 is modified to Sulfotyrosine.

As to quaternary structure, heterohexamer; disulfide linked. Contains 2 sets of 3 non-identical chains (alpha, beta and gamma). The 2 heterotrimers are in head to head conformation with the N-termini in a small central domain. Post-translationally, conversion of fibrinogen to fibrin is triggered by thrombin, which cleaves fibrinopeptides A and B from alpha and beta chains, and thus exposes the N-terminal polymerization sites responsible for the formation of the soft clot.

It is found in the secreted. Cleaved by the protease thrombin to yield monomers which, together with fibrinogen alpha (FGA) and fibrinogen gamma (FGG), polymerize to form an insoluble fibrin matrix. Fibrin has a major function in hemostasis as one of the primary components of blood clots. In addition, functions during the early stages of wound repair to stabilize the lesion and guide cell migration during re-epithelialization. Was originally thought to be essential for platelet aggregation, based on in vitro studies using anticoagulated blood. However subsequent studies have shown that it is not absolutely required for thrombus formation in vivo. Enhances expression of SELP in activated platelets. Maternal fibrinogen is essential for successful pregnancy. Fibrin deposition is also associated with infection, where it protects against IFNG-mediated hemorrhage. May also facilitate the antibacterial immune response via both innate and T-cell mediated pathways. The polypeptide is Fibrinogen beta chain (FGB) (Odocoileus hemionus (Mule deer)).